Here is a 388-residue protein sequence, read N- to C-terminus: S-adenosylmethionine synthase (388 aa).

His-16 serves as a coordination point for ATP. Asp-18 serves as a coordination point for Mg(2+). K(+) is bound at residue Glu-44. 2 residues coordinate L-methionine: Glu-57 and Gln-100. The interval Gln-100–Lys-110 is flexible loop. ATP contacts are provided by residues Asp-167 to Lys-169, Arg-233 to Phe-234, Asp-242, Arg-248 to Lys-249, Ala-265, and Lys-269. Asp-242 serves as a coordination point for L-methionine. Lys-273 lines the L-methionine pocket.

This sequence belongs to the AdoMet synthase family. As to quaternary structure, homotetramer; dimer of dimers. Requires Mg(2+) as cofactor. K(+) serves as cofactor.

Its subcellular location is the cytoplasm. The enzyme catalyses L-methionine + ATP + H2O = S-adenosyl-L-methionine + phosphate + diphosphate. Its pathway is amino-acid biosynthesis; S-adenosyl-L-methionine biosynthesis; S-adenosyl-L-methionine from L-methionine: step 1/1. Functionally, catalyzes the formation of S-adenosylmethionine (AdoMet) from methionine and ATP. The overall synthetic reaction is composed of two sequential steps, AdoMet formation and the subsequent tripolyphosphate hydrolysis which occurs prior to release of AdoMet from the enzyme. This is S-adenosylmethionine synthase from Polynucleobacter asymbioticus (strain DSM 18221 / CIP 109841 / QLW-P1DMWA-1) (Polynucleobacter necessarius subsp. asymbioticus).